We begin with the raw amino-acid sequence, 721 residues long: Catalase-peroxidase 1 (721 aa).

Positions 98 to 223 (WHAAGSYRVA…LAAVQMGLIY (126 aa)) form a cross-link, tryptophyl-tyrosyl-methioninium (Trp-Tyr) (with M-249). His-99 (proton acceptor) is an active-site residue. Positions 223–249 (YVNPEGVNGQPDPLRTAQDVRVTFGRM) form a cross-link, tryptophyl-tyrosyl-methioninium (Tyr-Met) (with W-98). Residue His-264 coordinates heme b.

Belongs to the peroxidase family. Peroxidase/catalase subfamily. In terms of assembly, homodimer or homotetramer. Heme b is required as a cofactor. In terms of processing, formation of the three residue Trp-Tyr-Met cross-link is important for the catalase, but not the peroxidase activity of the enzyme.

It catalyses the reaction H2O2 + AH2 = A + 2 H2O. It carries out the reaction 2 H2O2 = O2 + 2 H2O. In terms of biological role, bifunctional enzyme with both catalase and broad-spectrum peroxidase activity. The sequence is that of Catalase-peroxidase 1 from Legionella pneumophila subsp. pneumophila (strain Philadelphia 1 / ATCC 33152 / DSM 7513).